A 425-amino-acid chain; its full sequence is UDP-N-acetylglucosamine 1-carboxyvinyltransferase (425 aa).

Residue 22-23 (KN) participates in phosphoenolpyruvate binding. R91 lines the UDP-N-acetyl-alpha-D-glucosamine pocket. The active-site Proton donor is C115. Residue C115 is modified to 2-(S-cysteinyl)pyruvic acid O-phosphothioketal. Residues 120–124 (RPVDL), D309, and I331 each bind UDP-N-acetyl-alpha-D-glucosamine.

It belongs to the EPSP synthase family. MurA subfamily.

It is found in the cytoplasm. It carries out the reaction phosphoenolpyruvate + UDP-N-acetyl-alpha-D-glucosamine = UDP-N-acetyl-3-O-(1-carboxyvinyl)-alpha-D-glucosamine + phosphate. The protein operates within cell wall biogenesis; peptidoglycan biosynthesis. Functionally, cell wall formation. Adds enolpyruvyl to UDP-N-acetylglucosamine. The sequence is that of UDP-N-acetylglucosamine 1-carboxyvinyltransferase from Akkermansia muciniphila (strain ATCC BAA-835 / DSM 22959 / JCM 33894 / BCRC 81048 / CCUG 64013 / CIP 107961 / Muc).